The primary structure comprises 121 residues: Somatostatin-1 (121 aa).

A signal peptide spans 1–24; sequence MKMVSSSRLRCLLVLLLSLTASIS. A propeptide spanning residues 25–105 is cleaved from the precursor; sequence CSFAGQRDSK…SGGPLLAPRE (81 aa). A disordered region spans residues 76-99; sequence NFPLAEGGPEDAHADLERAASGGP. A disulfide bond links Cys110 and Cys121.

This sequence belongs to the somatostatin family.

It is found in the secreted. Functionally, somatostatin inhibits the release of somatotropin. This Lophius americanus (American angler) protein is Somatostatin-1 (sst1).